A 161-amino-acid polypeptide reads, in one-letter code: MAQISDSLDVAPESFSTETPNEEAPKAPRAVLNVSGGAVGRRKQATARVRLVPGSGSITVNGREFADYFPNKLHQQLVNDPFKVLDLLGSYDVVARISGGGPSGQAGALRLGIARALNEIDEENNRAVLKKNGFLSRDARVKERKKAGLKKARKAPQFSKR.

Disordered stretches follow at residues 1–28 (MAQI…PKAP) and 142–161 (KERK…FSKR).

It belongs to the universal ribosomal protein uS9 family.

This chain is Small ribosomal subunit protein uS9, found in Clavibacter sepedonicus (Clavibacter michiganensis subsp. sepedonicus).